Reading from the N-terminus, the 652-residue chain is MSQIHKHTIPANIADRCLINPQQYEAMYQQSINAPDTFWGEQGKILDWITPYQKVKNTSFAPGNVSIKWYEDGTLNLAANCLDRHLQENGDRTAIIWEGDDASQSKHISYKELHRDVCRFANTLLELGIKKGDVVAIYMPMVPEAAVAMLACARIGAVHSVIFGGFSPEAVAGRIIDSSSRLVITSDEGVRAGRSIPLKKNVDDALKNPNVTSVEHVVVLKRTGGKIDWQEGRDLWWHDLVEQASAQHQAEEMNAEDPLFILYTSGSTGKPKGVLHTTGGYLVYAALTFKYVFDYHPGDIYWCTADVGWVTGHSYLLYGPLACGATTLMFEGVPNWPTPARMAQVVDKHQVNILYTAPTAIRALMAEGDKAIEGTDRSSLRILGSVGEPINPEAWEWYWKKIGNEKCPVVDTWWQTETGGFMITPLPGATELKAGSATRPFFGVQPALVDNEGNPLEGATEGSLVITDSWPGQARTLFGDHERFEQTYFSTFKNMYFSGDGARRDEDGYYWITGRVDDVLNVSGHRLGTAEIESALVAHPKIAEAAVVGIPHNIKGQAIYAYVTLNHGEEPSPELYAEVRNWVRKEIGPLATPDVLHWTDSLPKTRSGKIMRRILRKIAAGDTSNLGDTSTLADPGVVEKLLEEKQAIAMPS.

Residues 191–194, Thr311, and Asn335 contribute to the CoA site; that span reads RAGR. ATP-binding positions include 387–389, 411–416, Asp500, and Arg515; these read GEP and DTWWQT. Residue Ser523 coordinates CoA. Residue Arg526 participates in ATP binding. Residues Val537, His539, and Ile542 each contribute to the Mg(2+) site. Arg584 is a binding site for CoA. N6-acetyllysine is present on Lys609.

This sequence belongs to the ATP-dependent AMP-binding enzyme family. The cofactor is Mg(2+). In terms of processing, acetylated. Deacetylation by the SIR2-homolog deacetylase activates the enzyme.

It carries out the reaction acetate + ATP + CoA = acetyl-CoA + AMP + diphosphate. In terms of biological role, catalyzes the conversion of acetate into acetyl-CoA (AcCoA), an essential intermediate at the junction of anabolic and catabolic pathways. Acs undergoes a two-step reaction. In the first half reaction, Acs combines acetate with ATP to form acetyl-adenylate (AcAMP) intermediate. In the second half reaction, it can then transfer the acetyl group from AcAMP to the sulfhydryl group of CoA, forming the product AcCoA. Its function is as follows. Enables the cell to use acetate during aerobic growth to generate energy via the TCA cycle, and biosynthetic compounds via the glyoxylate shunt. Acetylates CheY, the response regulator involved in flagellar movement and chemotaxis. The polypeptide is Acetyl-coenzyme A synthetase (Escherichia coli O6:H1 (strain CFT073 / ATCC 700928 / UPEC)).